A 437-amino-acid chain; its full sequence is Vasoactive intestinal polypeptide receptor 2 (437 aa).

An N-terminal signal peptide occupies residues 1–22 (MRASVVLTCYCWLLVRVSSIHP). Residues 23-123 (ECRFHLEIQE…EDESKITFYI (101 aa)) are Extracellular-facing. 3 disulfide bridges follow: Cys37–Cys60, Cys51–Cys92, and Cys74–Cys108. N-linked (GlcNAc...) asparagine glycosylation is found at Asn57, Asn87, and Asn91. The chain crosses the membrane as a helical span at residues 124-149 (LVKAIYTLGYSVSLMSLTTGSIIICL). The Cytoplasmic portion of the chain corresponds to 150–157 (FRKLHCTR). The helical transmembrane segment at 158-179 (NYIHLNLFLSFMLRAISVLVKD) threads the bilayer. Residues 180-202 (SVLYSSSGTLRCHDQPGSWVGCK) are Extracellular-facing. Cys201 and Cys270 are joined by a disulfide. The chain crosses the membrane as a helical span at residues 203–227 (LSLVFFQYCIMANFYWLLVEGLYLH). Residues 228–238 (TLLVAILPPSR) lie on the Cytoplasmic side of the membrane. The helical transmembrane segment at 239 to 260 (CFLAYLLIGWGIPSVCIGAWIA) threads the bilayer. Residues 261–279 (TRLSLEDTGCWDTNDHSIP) are Extracellular-facing. Residues 280 to 303 (WWVIRMPILISIVVNFALFISIVR) traverse the membrane as a helical segment. The Cytoplasmic segment spans residues 304-324 (ILLQKLTSPDVGGNDQSQYKR). A helical membrane pass occupies residues 325-345 (LAKSTLLLIPLFGVHYMVFAA). Over 346–353 (FPIGISST) the chain is Extracellular. A helical membrane pass occupies residues 354-377 (YQILFELCVGSFQGLVVAVLYCFL). Residues 378–437 (NSEVQCELKRRWRGLCLTQPGSRDYRLHSWSMSRNGSESALQIHRGSRTQSFLQSETSVI) lie on the Cytoplasmic side of the membrane.

The protein belongs to the G-protein coupled receptor 2 family. As to quaternary structure, interacts with ADCYAP1/PACAP (via N-terminal extracellular domain); activated by PACAP27 and CAPAC38 neuropeptides. Interacts with VIP; the interaction results in VIPR1 activation. As to expression, mainly in the thalamus, hippocampus and in the suprachiasmatic nucleus.

It is found in the cell membrane. G protein-coupled receptor activated by the neuropeptides vasoactive intestinal peptide (VIP) and pituitary adenylate cyclase-activating polypeptide (ADCYAP1/PACAP). Binds VIP and both PACAP27 and PACAP38 bioactive peptides with the order of ligand affinity of VIP = PACAP38 &gt; PACAP27. Ligand binding causes a conformation change that triggers signaling via guanine nucleotide-binding proteins (G proteins) and modulates the activity of downstream effectors. Activates cAMP-dependent pathway. May be coupled to phospholipase C. This is Vasoactive intestinal polypeptide receptor 2 from Rattus norvegicus (Rat).